A 135-amino-acid polypeptide reads, in one-letter code: Basic phospholipase A2 KBf-VA (135 aa).

7 disulfide bridges follow: Cys-28–Cys-87, Cys-42–Cys-134, Cys-44–Cys-60, Cys-59–Cys-115, Cys-66–Cys-108, Cys-76–Cys-101, and Cys-94–Cys-106. 3 residues coordinate Ca(2+): Tyr-43, Gly-45, and Gly-47. His-63 is an active-site residue. A Ca(2+)-binding site is contributed by Asp-64. Asp-109 is an active-site residue.

It belongs to the phospholipase A2 family. Group I subfamily. D49 sub-subfamily. The cofactor is Ca(2+). Expressed by the venom gland.

The protein resides in the secreted. It carries out the reaction a 1,2-diacyl-sn-glycero-3-phosphocholine + H2O = a 1-acyl-sn-glycero-3-phosphocholine + a fatty acid + H(+). Snake venom phospholipase A2 (PLA2) that inhibits neuromuscular transmission by blocking acetylcholine release from the nerve termini. PLA2 catalyzes the calcium-dependent hydrolysis of the 2-acyl groups in 3-sn-phosphoglycerides. This is Basic phospholipase A2 KBf-VA from Bungarus fasciatus (Banded krait).